Consider the following 341-residue polypeptide: Malate dehydrogenase, mitochondrial (341 aa).

NAD(+)-binding positions include 35–41 and Asp61; that span reads GAGGGIG. Substrate is bound by residues Arg109 and Arg115. An NAD(+)-binding site is contributed by Asn122. Positions 147 and 181 each coordinate substrate. His205 functions as the Proton acceptor in the catalytic mechanism. Met254 contacts NAD(+).

It belongs to the LDH/MDH superfamily. MDH type 1 family. As to quaternary structure, homodimer.

The protein localises to the mitochondrion matrix. It catalyses the reaction (S)-malate + NAD(+) = oxaloacetate + NADH + H(+). The polypeptide is Malate dehydrogenase, mitochondrial (MDH1) (Schizosaccharomyces pombe (strain 972 / ATCC 24843) (Fission yeast)).